We begin with the raw amino-acid sequence, 55 residues long: Cytochrome b-c1 complex subunit 9 (55 aa).

Residues 1-15 (MKVIYNTLFKRTSTY) are Mitochondrial matrix-facing. Residues 16-41 (AVAIIASAFFFERALDVTSVAIFEGI) form a helical membrane-spanning segment. Topologically, residues 42-55 (NKGKLWKDIKGKYE) are chloroplast intermembrane.

Belongs to the UQCR10/QCR9 family. In terms of assembly, component of the ubiquinol-cytochrome c oxidoreductase (cytochrome b-c1 complex, complex III, CIII), a multisubunit enzyme composed of 3 respiratory subunits cytochrome b, cytochrome c1 and Rieske protein, 2 core protein subunits, and additional low-molecular weight protein subunits. The complex exists as an obligatory dimer and forms supercomplexes (SCs) in the inner mitochondrial membrane with cytochrome c oxidase (complex IV, CIV).

The protein localises to the mitochondrion inner membrane. In terms of biological role, component of the ubiquinol-cytochrome c oxidoreductase, a multisubunit transmembrane complex that is part of the mitochondrial electron transport chain which drives oxidative phosphorylation. The respiratory chain contains 3 multisubunit complexes succinate dehydrogenase (complex II, CII), ubiquinol-cytochrome c oxidoreductase (cytochrome b-c1 complex, complex III, CIII) and cytochrome c oxidase (complex IV, CIV), that cooperate to transfer electrons derived from NADH and succinate to molecular oxygen, creating an electrochemical gradient over the inner membrane that drives transmembrane transport and the ATP synthase. The cytochrome b-c1 complex catalyzes electron transfer from ubiquinol to cytochrome c, linking this redox reaction to translocation of protons across the mitochondrial inner membrane, with protons being carried across the membrane as hydrogens on the quinol. In the process called Q cycle, 2 protons are consumed from the matrix, 4 protons are released into the intermembrane space and 2 electrons are passed to cytochrome c. In Drosophila melanogaster (Fruit fly), this protein is Cytochrome b-c1 complex subunit 9 (ox).